The primary structure comprises 791 residues: MAITAKPKAGVWAVLWDLLTTVDHKKIGLMYTATAFFAFALAGVFSLLIRTQLAVPNNQFLTGEQYNQILTLHGATMLFFFIIQAGLTGFGNFVVPLMLGARDVALPRVNAFSYWAFLGAIVLALMSYFFPGGAPSVGWTFYYPFSAQSESGVDFYLAAILLLGFSSLLGNANFVATIYNLRAQGMSLWKMPIYVWSVFAASVLNLFSLAGLTAATLLVLLERKIGLSWFNPAVGGDPVLFQQFFWFYSHPTVYVMLLPYLGILAEVASTFARKPLFGYRQMVWAQMGIVVLGTMVWAHHMFTVGESTLFQIAFAFFTALIAVPTGVKLFNIIGTLWGGKLQMKTPLYWVLGFIFNFLLGGITGVMLSMTPLDYQFHDSYFVVAHFHNVLMAGSGFGAFAGLYYWWPKMTGRMYDERLGRLHFWLFLVGYLLTFLPQYALGYLGMPRRYYTYNADIAGWPELNLLSTIGAYILGLGGLVWIYTMWKSLRSGPKAPDNPWGGYTLEWLTASPPKAHNFDVKLPTEFPSERPLYDWKKKGVELKPEDPAHIHLPNSSFWPFYSAATLFAFFVAVAALPVPNVWMWVFLALFAYGLVRWALEDEYSHPVEHHTVTGKSNAWMGMAWFIVSEVGLFAILIAGYLYLRLSGAATPPEERPALWLALLNTFLLVSSSFTVHFAHHDLRRGRFNPFRFGLLVTIILGVLFFLVQSWEFYQFYHHSSWQENLWTAAFFTIVGLHGLHVVIGGFGLILAYLQALRGKITLHNHGTLEAASMYWHLVDAVWLVIVTIFYVW.

The interval 1–473 (MAITAKPKAG…LLSTIGAYIL (473 aa)) is COX1. Residues 29 to 49 (LMYTATAFFAFALAGVFSLLI) traverse the membrane as a helical segment. Histidine 73 contacts Fe(II)-heme a. Transmembrane regions (helical) follow at residues 78-98 (LFFF…VPLM), 111-131 (AFSY…YFFP), 155-175 (FYLA…ANFV), 201-221 (ASVL…LVLL), 244-264 (FFWF…LGIL), 282-302 (MVWA…HHMF), 312-332 (IAFA…LFNI), 347-367 (LYWV…GVML), 381-401 (FVVA…AFAG), 423-443 (FWLF…LGYL), 464-484 (LLST…IYTM), 566-586 (FAFF…WVFL), 617-637 (AWMG…ILIA), 657-677 (LWLA…VHFA), 691-711 (FGLL…SWEF), 729-749 (FFTI…GLIL), and 771-791 (SMYW…FYVW). Cu cation-binding residues include histidine 250, tyrosine 254, histidine 299, and histidine 300. A cross-link (1'-histidyl-3'-tyrosine (His-Tyr)) is located at residues 250 to 254 (HPTVY). Residue histidine 385 participates in heme a3 binding. Histidine 387 lines the Fe(II)-heme a pocket. Residues 545–791 (DPAHIHLPNS…LVIVTIFYVW (247 aa)) form a COX3 region.

It in the N-terminal section; belongs to the heme-copper respiratory oxidase family. The protein in the C-terminal section; belongs to the cytochrome c oxidase subunit 3 family. Possibly a heterodimer of A-protein (contains: cytochrome c oxidase subunits I and III) and subunit II. The A-protein could also present a precursor form of subunits I and III. Requires Cu(2+) as cofactor. It depends on heme as a cofactor.

Its subcellular location is the cell membrane. The catalysed reaction is 4 Fe(II)-[cytochrome c] + O2 + 8 H(+)(in) = 4 Fe(III)-[cytochrome c] + 2 H2O + 4 H(+)(out). Its pathway is energy metabolism; oxidative phosphorylation. Cytochrome c oxidase is the component of the respiratory chain that catalyzes the reduction of oxygen to water. Subunits 1-3 form the functional core of the enzyme complex. Co I is the catalytic subunit of the enzyme. Electrons originating in cytochrome c are transferred via the copper A center of subunit 2 and heme a of subunit 1 to the bimetallic center formed by heme a3 and copper B. This cytochrome c oxidase shows proton pump activity across the membrane in addition to the electron transfer. The sequence is that of Cytochrome c oxidase polypeptide I+III (caaA) from Thermus thermophilus (strain ATCC 27634 / DSM 579 / HB8).